A 790-amino-acid polypeptide reads, in one-letter code: Cadherin-6 (790 aa).

Residues 1 to 18 (MRTYRYFLLLFWVGQPYP) form the signal peptide. The propeptide occupies 19–53 (TLSTPLSKRTSGFPAKKRALELSGNSKNELNRSKR). N49 carries an N-linked (GlcNAc...) asparagine glycan. Cadherin domains lie at 54–159 (SWMW…EPIF), 160–268 (TKEV…PPRF), 269–383 (PQST…PPVF), 384–486 (SKLA…DNAP), and 487–608 (EFAE…LIHP). Residues 54-615 (SWMWNQFFLL…IHPTGLSTGA (562 aa)) are Extracellular-facing. Residue N255 is glycosylated (N-linked (GlcNAc...) asparagine). The segment at 259–288 (TDVNDNPPRFPQSTYQFKTPESSPPGTPIG) is disordered. The span at 269–279 (PQSTYQFKTPE) shows a compositional bias: polar residues. 4 N-linked (GlcNAc...) asparagine glycosylation sites follow: N399, N437, N455, and N536. A helical transmembrane segment spans residues 616–636 (LVAILLCIVILLVTVVLFAAL). The Cytoplasmic portion of the chain corresponds to 637–790 (RRQRKKEPLI…YGGVDSDKDS (154 aa)). A phosphoserine mark is found at S786 and S790.

As to expression, highly expressed in brain, cerebellum, and kidney. Lung, pancreas, and gastric mucosa show a weak expression. Also expressed in certain liver and kidney carcinomas.

It localises to the cell membrane. In terms of biological role, cadherins are calcium-dependent cell adhesion proteins. They preferentially interact with themselves in a homophilic manner in connecting cells; cadherins may thus contribute to the sorting of heterogeneous cell types. The sequence is that of Cadherin-6 (CDH6) from Homo sapiens (Human).